A 2349-amino-acid chain; its full sequence is Reducing polyketide synthase hmp8 (2349 aa).

The Ketosynthase family 3 (KS3) domain occupies 9–435 (HVPVAIIGLA…GTNGHVVLEA (427 aa)). Residues Cys-182, His-317, and His-357 each act as for beta-ketoacyl synthase activity in the active site. The segment at 551-856 (FVFTGQGAQW…SHNGIKNVAY (306 aa)) is malonyl-CoA:ACP transacylase (MAT) domain. Positions 930-1066 (RSLIGAPVPM…GLVAIDYEES (137 aa)) are N-terminal hotdog fold. The region spanning 930-1250 (RSLIGAPVPM…TSELDMDSGK (321 aa)) is the PKS/mFAS DH domain. The tract at residues 932–1244 (LIGAPVPMMA…SVKDFRTSEL (313 aa)) is dehydratase (DH) domain. His-962 (proton acceptor; for dehydratase activity) is an active-site residue. The segment at 1094 to 1250 (PEHYAHDKFY…TSELDMDSGK (157 aa)) is C-terminal hotdog fold. Catalysis depends on Asp-1160, which acts as the Proton donor; for dehydratase activity. The segment at 1641-1953 (GLLDTLKFVP…QGKHRGKMVL (313 aa)) is enoyl reductase (ER) domain. The interval 1977–2157 (ATYLFVGGLG…ISVNLGIMRD (181 aa)) is ketoreductase (KR) domain. Residues 2267-2344 (EAAEIITDAL…SFAVKIAEKS (78 aa)) enclose the Carrier domain. Ser-2304 bears the O-(pantetheine 4'-phosphoryl)serine mark.

Its pathway is secondary metabolite biosynthesis. Reducing polyketide synthase; part of the gene cluster that mediates the biosynthesis of hypothemycin, a resorcylic acid lactone (RAL) that irreversibly inhibits a subset of protein kinases with a conserved cysteine in the ATP binding site such as human ERK2. The first step is performed by both PKSs hmp3 and hmp8 and leads to the production of 7',8'-dehydrozearalenol (DHZ). The highly reducing PKS hpm8 synthesizes the reduced hexaketide (7S,11S,2E,8E)-7,11-dihydroxy-dodeca-2,8-dienoate, which is transferred downstream to the non-reducing PKS hpm3. Hpm3 then extends the reduced hexaketide to a nonaketide, after which regioselective cyclization and macrolactonization affords DHZ. The next step is the conversion of DHZ into aigialomycin C and is performed by the O-methyltransferase hmp5, the FAD-binding monooxygenase hmp7, and the cytochrome P450 monooxygenase hmp1. The wide substrate tolerance of the hmp5 and hmp7 implies that the reactions from DHZ to aigialomycin C can occur in any order. The steps from aigialomycin C to hypothemycin are less well established. The FAD-linked oxidoreductase hmp9 presumably catalyzes oxidation of the C-6' hydroxyl to a ketone. The timing of this oxidation is important, since the resulting enone functional group is a Michael acceptor that can react spontaneously with glutathione, an abundant metabolite in fungal cells. The glutathione S-transferase hmp2 catalyzes cis-trans isomerization of the 7',8' double bond with equilibrium favoring the trans isomer. The hpm6-encoded transporter might preferentially pump hypothemycin out of the cell relative to the trans isomer aigialomycin A. The cis-to-trans isomerization may be coupled with C-4' hydroxylation, since all known hypothemycin analogs containing the enone functional group also have hydroxyl groups at both C-4' and C-5'. This chain is Reducing polyketide synthase hmp8, found in Hypomyces subiculosus (Nectria subiculosa).